A 157-amino-acid chain; its full sequence is Protein Smg (157 aa).

The protein belongs to the Smg family.

The sequence is that of Protein Smg from Salmonella agona (strain SL483).